Here is a 414-residue protein sequence, read N- to C-terminus: GPI mannosyltransferase 1 (414 aa).

A run of 10 helical transmembrane segments spans residues 6 to 26 (ISHI…FGLY), 87 to 107 (YIFM…LSGI), 119 to 139 (IIML…STRG), 149 to 171 (IMLS…WLGL), 183 to 203 (LPSI…VPIV), 213 to 233 (FLIT…SIYG), 282 to 302 (MEKF…PLLF), 316 to 336 (FAFV…FLIF), 356 to 376 (IVAL…AYQL), and 387 to 407 (GLLF…SVFI).

The protein belongs to the PIGM family.

It localises to the endoplasmic reticulum membrane. Its pathway is glycolipid biosynthesis; glycosylphosphatidylinositol-anchor biosynthesis. Functionally, mannosyltransferase involved in glycosylphosphatidylinositol-anchor biosynthesis. Transfers the first alpha-1,4-mannose to GlcN-acyl-PI during GPI precursor assembly. Required for cell wall integrity. This chain is GPI mannosyltransferase 1 (GPI14), found in Debaryomyces hansenii (strain ATCC 36239 / CBS 767 / BCRC 21394 / JCM 1990 / NBRC 0083 / IGC 2968) (Yeast).